The following is a 462-amino-acid chain: MKEKLRLYHTNDLHSHFENWPKIVDYIEQKRKEHQSDGEETLVFDIGDHLDRFQFVTEATFGKANVDLLNRLHIDGAAIGNNEGITLPHEELAALYDHAEFPVIVSNLFDKNGNRPSWAVPYHIKSLKNGMSIAFLGVTVPYYPVYDKLGWTVTDALESIKETILEVKGQADIIVLLSHLGILDDQAVAEAVPEIDVILESHTHHLLEDGQVVNGVLLASAEKYGHYVGCVEITVDSVQRSINSKTASVQNMAEWTGESAETKAFLNEKEREAEEKLSDAVAELAQDAEVKWFEESELPLLLAYALKEWCETDISMVNSGVILGPLKAGPVTKLDLHRICPHPINPVAVRLTGEELKETIVHAASEQMEQLRIKGLGFRGEVMGKMVYAGVEVETKRLDDGITHVTRITLNGEDIEKHKQYSVAVLDMFTLGKLFPLIRDAAEKEYFMPEFLRDLLAWKLAQ.

Residues Asp-12, His-14, Asp-48, Asn-81, His-179, and His-202 each coordinate a divalent metal cation. Positions 258-291 form a coiled coil; that stretch reads ESAETKAFLNEKEREAEEKLSDAVAELAQDAEVK.

This sequence belongs to the metallophosphoesterase superfamily. The cofactor is a divalent metal cation.

This is an uncharacterized protein from Bacillus subtilis (strain 168).